A 631-amino-acid polypeptide reads, in one-letter code: DNA mismatch repair protein MutL (631 aa).

2 disordered regions span residues 337-362 (PHSPQIDDSSPYVKPETESSAFELQS) and 400-429 (AVQSNAFGSMSVPRETRSGSSGESRPRAEL).

The protein belongs to the DNA mismatch repair MutL/HexB family.

This protein is involved in the repair of mismatches in DNA. It is required for dam-dependent methyl-directed DNA mismatch repair. May act as a 'molecular matchmaker', a protein that promotes the formation of a stable complex between two or more DNA-binding proteins in an ATP-dependent manner without itself being part of a final effector complex. This is DNA mismatch repair protein MutL from Shewanella oneidensis (strain ATCC 700550 / JCM 31522 / CIP 106686 / LMG 19005 / NCIMB 14063 / MR-1).